A 186-amino-acid polypeptide reads, in one-letter code: Inner membrane-spanning protein YciB (186 aa).

5 helical membrane passes run 10–30 (IILFFAAFKVWGIYVATAVAI), 47–67 (VEPLQWLSLGVIVLFGGATLL), 76–96 (WKPTVLYWLMGGTLLVGQLVF), 121–141 (WGWTGFFATMGVLNLWVAYNF), and 149–169 (FKLFGGIGLMFAFVIAQALYL).

It belongs to the YciB family.

Its subcellular location is the cell inner membrane. Functionally, plays a role in cell envelope biogenesis, maintenance of cell envelope integrity and membrane homeostasis. The sequence is that of Inner membrane-spanning protein YciB from Acidovorax sp. (strain JS42).